The chain runs to 471 residues: GTPase Der (471 aa).

2 consecutive EngA-type G domains span residues 5 to 168 and 186 to 359; these read PVIA…TDLE and IRVA…DSAF. GTP-binding positions include 11 to 18, 58 to 62, 120 to 123, 192 to 199, 239 to 243, and 304 to 307; these read GRPNVGKS, DTGGI, NKTD, DTAGV, and NKWD. The KH-like domain maps to 360–444; that stretch reads IKIGTNELTR…PIRLEFKSGT (85 aa).

This sequence belongs to the TRAFAC class TrmE-Era-EngA-EngB-Septin-like GTPase superfamily. EngA (Der) GTPase family. As to quaternary structure, associates with the 50S ribosomal subunit.

GTPase that plays an essential role in the late steps of ribosome biogenesis. This is GTPase Der from Alcanivorax borkumensis (strain ATCC 700651 / DSM 11573 / NCIMB 13689 / SK2).